Reading from the N-terminus, the 448-residue chain is Na(+)-translocating NADH-quinone reductase subunit A (448 aa).

Belongs to the NqrA family. As to quaternary structure, composed of six subunits; NqrA, NqrB, NqrC, NqrD, NqrE and NqrF.

It carries out the reaction a ubiquinone + n Na(+)(in) + NADH + H(+) = a ubiquinol + n Na(+)(out) + NAD(+). In terms of biological role, NQR complex catalyzes the reduction of ubiquinone-1 to ubiquinol by two successive reactions, coupled with the transport of Na(+) ions from the cytoplasm to the periplasm. NqrA to NqrE are probably involved in the second step, the conversion of ubisemiquinone to ubiquinol. The chain is Na(+)-translocating NADH-quinone reductase subunit A from Alcanivorax borkumensis (strain ATCC 700651 / DSM 11573 / NCIMB 13689 / SK2).